A 358-amino-acid chain; its full sequence is Pre-mRNA-splicing factor spp2 (358 aa).

Disordered regions lie at residues 1–250 and 298–358; these read MTDQ…RAVP and AWNQ…RGDR. The span at 24–40 shows a compositional bias: basic residues; that stretch reads KTKKPSRPTHTRRHHAR. 2 stretches are compositionally biased toward basic and acidic residues: residues 80 to 137 and 145 to 160; these read LENR…DASR and RSRD…KDLQ. Residues 174-185 show a composition bias toward polar residues; it reads NPKSTTTATSSF. Basic and acidic residues-rich tracts occupy residues 233–246 and 309–358; these read SSHD…HSDY and GDSR…RGDR.

This sequence belongs to the SPP2 family. In terms of assembly, associated with the spliceosome.

The protein localises to the nucleus. Functionally, involved in spliceosome maturation and the first step of pre-mRNA splicing. This is Pre-mRNA-splicing factor spp2 (msp-40) from Neurospora crassa (strain ATCC 24698 / 74-OR23-1A / CBS 708.71 / DSM 1257 / FGSC 987).